We begin with the raw amino-acid sequence, 215 residues long: NAD(P)H-quinone oxidoreductase subunit I (215 aa).

4Fe-4S ferredoxin-type domains lie at Gly55–Val84 and Arg95–Glu124. [4Fe-4S] cluster contacts are provided by Cys64, Cys67, Cys70, Cys74, Cys104, Cys107, Cys110, and Cys114. A disordered region spans residues Ala166–Ala215. A compositionally biased stretch (basic and acidic residues) spans Met169–Arg180. Polar residues predominate over residues Glu203–Ala215.

It belongs to the complex I 23 kDa subunit family. In terms of assembly, NDH-1 is composed of at least 11 different subunits. [4Fe-4S] cluster is required as a cofactor.

Its subcellular location is the cellular thylakoid membrane. The catalysed reaction is a plastoquinone + NADH + (n+1) H(+)(in) = a plastoquinol + NAD(+) + n H(+)(out). It carries out the reaction a plastoquinone + NADPH + (n+1) H(+)(in) = a plastoquinol + NADP(+) + n H(+)(out). Functionally, NDH-1 shuttles electrons from an unknown electron donor, via FMN and iron-sulfur (Fe-S) centers, to quinones in the respiratory and/or the photosynthetic chain. The immediate electron acceptor for the enzyme in this species is believed to be plastoquinone. Couples the redox reaction to proton translocation, and thus conserves the redox energy in a proton gradient. In Parasynechococcus marenigrum (strain WH8102), this protein is NAD(P)H-quinone oxidoreductase subunit I.